The following is a 130-amino-acid chain: uncharacterized protein (130 aa).

3 helical membrane-spanning segments follow: residues 34–54 (AILI…FAFF), 73–93 (LLLT…GWLA), and 107–127 (FGTG…IVWI).

Its subcellular location is the cell membrane. This is an uncharacterized protein from Mycoplasma pneumoniae (strain ATCC 29342 / M129 / Subtype 1) (Mycoplasmoides pneumoniae).